The primary structure comprises 393 residues: Formate-dependent phosphoribosylglycinamide formyltransferase (393 aa).

Residues 22-23 (EL) and Glu82 each bind N(1)-(5-phospho-beta-D-ribosyl)glycinamide. ATP-binding positions include Arg114, Lys155, 160–165 (SSGKGQ), 195–198 (EGFI), and Glu203. Residues 119 to 308 (RLAAEELKLP…QFALHARAIL (190 aa)) enclose the ATP-grasp domain. Positions 267 and 279 each coordinate Mg(2+). N(1)-(5-phospho-beta-D-ribosyl)glycinamide contacts are provided by residues Asp286, Lys356, and 363 to 364 (RR).

This sequence belongs to the PurK/PurT family. As to quaternary structure, homodimer.

The catalysed reaction is N(1)-(5-phospho-beta-D-ribosyl)glycinamide + formate + ATP = N(2)-formyl-N(1)-(5-phospho-beta-D-ribosyl)glycinamide + ADP + phosphate + H(+). It functions in the pathway purine metabolism; IMP biosynthesis via de novo pathway; N(2)-formyl-N(1)-(5-phospho-D-ribosyl)glycinamide from N(1)-(5-phospho-D-ribosyl)glycinamide (formate route): step 1/1. In terms of biological role, involved in the de novo purine biosynthesis. Catalyzes the transfer of formate to 5-phospho-ribosyl-glycinamide (GAR), producing 5-phospho-ribosyl-N-formylglycinamide (FGAR). Formate is provided by PurU via hydrolysis of 10-formyl-tetrahydrofolate. This Pseudomonas savastanoi pv. phaseolicola (strain 1448A / Race 6) (Pseudomonas syringae pv. phaseolicola (strain 1448A / Race 6)) protein is Formate-dependent phosphoribosylglycinamide formyltransferase.